The sequence spans 953 residues: Zinc finger protein 618 (953 aa).

M1 carries the N-acetylmethionine modification. The tract at residues 1–56 (MSQPDGAAAPQVDGASAPGRKSAVNRERLKRSQKSSKVEGPEPVPAEASLSAEQGT) is disordered. Glycyl lysine isopeptide (Lys-Gly) (interchain with G-Cter in SUMO2) cross-links involve residues K63 and K81. 2 consecutive C2H2-type zinc fingers follow at residues 146–168 (YECG…VRAH) and 187–209 (YTCD…RDLH). A Glycyl lysine isopeptide (Lys-Gly) (interchain with G-Cter in SUMO2) cross-link involves residue K238. The C2H2-type 3 zinc finger occupies 255–277 (YTCEFCGKQYKYYTPYQEHVALH). 2 disordered regions span residues 283–305 (APGW…EVTP) and 337–390 (TPPA…SSEP). The segment covering 339-354 (PATQTQTFRAPNSGSP) has biased composition (polar residues). Basic and acidic residues predominate over residues 365–379 (FSRRVESKAQNHFEE). The segment at 391-413 (YTCGACGIQFQFYSNLLEHMQSH) adopts a C2H2-type 4 zinc-finger fold. Polar residues predominate over residues 419–428 (NNITSNQSRS). The tract at residues 419–461 (NNITSNQSRSPPAAVEEKWKPQAQRNSANNTTTSGLTPNSVIP) is disordered. K436 is covalently cross-linked (Glycyl lysine isopeptide (Lys-Gly) (interchain with G-Cter in SUMO2)). The segment covering 441 to 458 (AQRNSANNTTTSGLTPNS) has biased composition (polar residues).

Belongs to the krueppel C2H2-type zinc-finger protein family. In terms of assembly, interacts with UHRF2.

It localises to the nucleus. The protein resides in the chromosome. In terms of biological role, regulates UHRF2 function as a specific 5-hydroxymethylcytosine (5hmC) reader by regulating its chromatin localization. This Mus musculus (Mouse) protein is Zinc finger protein 618 (Znf618).